The chain runs to 425 residues: Riboflavin biosynthesis protein RibBA (425 aa).

The interval 1-204 (MTRLDSVERA…IADLIEWRRK (204 aa)) is DHBP synthase. D-ribulose 5-phosphate is bound by residues 28–29 (RE), Asp33, 141–145 (RPGHT), and Glu165. Position 29 (Glu29) interacts with Mg(2+). His144 serves as a coordination point for Mg(2+). The interval 205 to 425 (HEKHIERIAE…HLPGEFGGAL (221 aa)) is GTP cyclohydrolase II. 259-263 (RVHSE) lines the GTP pocket. Zn(2+)-binding residues include Cys264, Cys275, and Cys277. Residues Gln280, 303–305 (EGR), and Thr325 each bind GTP. Asp337 (proton acceptor; for GTP cyclohydrolase activity) is an active-site residue. The active-site Nucleophile; for GTP cyclohydrolase activity is the Arg339. 2 residues coordinate GTP: Thr360 and Lys365.

The protein in the N-terminal section; belongs to the DHBP synthase family. This sequence in the C-terminal section; belongs to the GTP cyclohydrolase II family. Mg(2+) serves as cofactor. Mn(2+) is required as a cofactor. It depends on Zn(2+) as a cofactor.

The catalysed reaction is D-ribulose 5-phosphate = (2S)-2-hydroxy-3-oxobutyl phosphate + formate + H(+). The enzyme catalyses GTP + 4 H2O = 2,5-diamino-6-hydroxy-4-(5-phosphoribosylamino)-pyrimidine + formate + 2 phosphate + 3 H(+). Its pathway is cofactor biosynthesis; riboflavin biosynthesis; 2-hydroxy-3-oxobutyl phosphate from D-ribulose 5-phosphate: step 1/1. The protein operates within cofactor biosynthesis; riboflavin biosynthesis; 5-amino-6-(D-ribitylamino)uracil from GTP: step 1/4. Its function is as follows. Catalyzes the conversion of D-ribulose 5-phosphate to formate and 3,4-dihydroxy-2-butanone 4-phosphate. Catalyzes the conversion of GTP to 2,5-diamino-6-ribosylamino-4(3H)-pyrimidinone 5'-phosphate (DARP), formate and pyrophosphate. The chain is Riboflavin biosynthesis protein RibBA from Mycobacterium avium (strain 104).